Consider the following 224-residue polypeptide: Metalloproteinase inhibitor 4 (224 aa).

A signal peptide spans 1-29 (MPWSPLAALSWALVLRLLALLWPPGRGEA). C30 contacts Zn(2+). Involved in metalloproteinase-binding regions lie at residues 30–33 (CSCA) and 99–100 (SS). Intrachain disulfides connect C30/C102, C32/C131, C42/C156, C158/C205, C163/C168, and C176/C197. In terms of domain architecture, NTR spans 30 to 156 (CSCAPAHPQQ…SLNHHYHQNC (127 aa)).

This sequence belongs to the protease inhibitor I35 (TIMP) family. As to expression, expressed in brain, heart, ovary and skeletal muscle.

It is found in the secreted. Functionally, complexes with metalloproteinases (such as collagenases) and irreversibly inactivates them by binding to their catalytic zinc cofactor. The protein is Metalloproteinase inhibitor 4 (Timp4) of Mus musculus (Mouse).